A 396-amino-acid chain; its full sequence is 8-amino-7-oxononanoate synthase (396 aa).

Residue R29 coordinates substrate. 116 to 117 (GY) is a binding site for pyridoxal 5'-phosphate. Position 141 (H141) interacts with substrate. Pyridoxal 5'-phosphate contacts are provided by S187, H215, and T243. N6-(pyridoxal phosphate)lysine is present on K246. T360 lines the substrate pocket.

The protein belongs to the class-II pyridoxal-phosphate-dependent aminotransferase family. BioF subfamily. In terms of assembly, homodimer. The cofactor is pyridoxal 5'-phosphate.

It catalyses the reaction 6-carboxyhexanoyl-[ACP] + L-alanine + H(+) = (8S)-8-amino-7-oxononanoate + holo-[ACP] + CO2. It functions in the pathway cofactor biosynthesis; biotin biosynthesis. Its function is as follows. Catalyzes the decarboxylative condensation of pimeloyl-[acyl-carrier protein] and L-alanine to produce 8-amino-7-oxononanoate (AON), [acyl-carrier protein], and carbon dioxide. In Nitrosospira multiformis (strain ATCC 25196 / NCIMB 11849 / C 71), this protein is 8-amino-7-oxononanoate synthase.